We begin with the raw amino-acid sequence, 118 residues long: Large ribosomal subunit protein bL20 (118 aa).

It belongs to the bacterial ribosomal protein bL20 family.

Its function is as follows. Binds directly to 23S ribosomal RNA and is necessary for the in vitro assembly process of the 50S ribosomal subunit. It is not involved in the protein synthesizing functions of that subunit. This is Large ribosomal subunit protein bL20 from Yersinia pseudotuberculosis serotype O:1b (strain IP 31758).